The following is a 344-amino-acid chain: UDP-3-O-acylglucosamine N-acyltransferase (344 aa).

The active-site Proton acceptor is histidine 248.

This sequence belongs to the transferase hexapeptide repeat family. LpxD subfamily. As to quaternary structure, homotrimer.

It carries out the reaction a UDP-3-O-[(3R)-3-hydroxyacyl]-alpha-D-glucosamine + a (3R)-hydroxyacyl-[ACP] = a UDP-2-N,3-O-bis[(3R)-3-hydroxyacyl]-alpha-D-glucosamine + holo-[ACP] + H(+). Its pathway is bacterial outer membrane biogenesis; LPS lipid A biosynthesis. Catalyzes the N-acylation of UDP-3-O-acylglucosamine using 3-hydroxyacyl-ACP as the acyl donor. Is involved in the biosynthesis of lipid A, a phosphorylated glycolipid that anchors the lipopolysaccharide to the outer membrane of the cell. The protein is UDP-3-O-acylglucosamine N-acyltransferase of Synechocystis sp. (strain ATCC 27184 / PCC 6803 / Kazusa).